The chain runs to 318 residues: Olfactory receptor 10H1 (318 aa).

Topologically, residues 1–25 are extracellular; it reads MQRANHSTVTQFILVGFSVFPHLQL. Asn5 carries N-linked (GlcNAc...) asparagine glycosylation. The helical transmembrane segment at 26–46 threads the bilayer; that stretch reads MLFLLFLLMYLFTLLGNLLIM. The Cytoplasmic portion of the chain corresponds to 47–54; that stretch reads ATVWSERS. The helical transmembrane segment at 55-75 threads the bilayer; the sequence is LHTPMYLFLCALSVSEILYTV. Over 76-99 the chain is Extracellular; it reads AIIPRMLADLLSTQRSIAFLACAS. Residues Cys97 and Cys189 are joined by a disulfide bond. The helical transmembrane segment at 100 to 120 threads the bilayer; the sequence is QMFFSFSFGFTHSFLLTVMGY. Residues 121–139 lie on the Cytoplasmic side of the membrane; sequence DRYVAICHPLRYNVLMSPR. Residues 140-160 traverse the membrane as a helical segment; sequence GCACLVGCSWAGGLVMGMVVT. At 161-197 the chain is on the extracellular side; sequence SAIFHLAFCGHKEIHHFACHVPPLLKLACGDDVLVVA. A helical transmembrane segment spans residues 198–218; sequence KGVGLVCITALLGCFLLILLS. The Cytoplasmic portion of the chain corresponds to 219–238; sequence YAFIVAAILKIPSAEGRNKA. A helical transmembrane segment spans residues 239–259; it reads FSTCASHLTVVVVHYGFASVI. Residues 260–272 are Extracellular-facing; it reads YLKPKSPQSLEGD. Residues 273–293 traverse the membrane as a helical segment; it reads TLMGITYTVLTPFLSPIIFSL. Topologically, residues 294–318 are cytoplasmic; it reads RNKELKVAMKKTFFSKLYPEKNVMM.

It belongs to the G-protein coupled receptor 1 family.

It is found in the cell membrane. Functionally, odorant receptor. This chain is Olfactory receptor 10H1 (OR10H1), found in Homo sapiens (Human).